Reading from the N-terminus, the 624-residue chain is Leucine-rich repeat and IQ domain-containing protein 3 (624 aa).

3 LRR repeats span residues 51–72, 73–94, and 98–119; these read SLRV…QSCI, KLIK…KFWN, and NLKL…CVLS. One can recognise an LRRCT domain in the interval 132-179; that stretch reads CPVSLKKGYRHVLVNSIWPLKALDHHVISDEEIIQNWHLPERFKACNH. The IQ domain occupies 215 to 244; that stretch reads HNSPVLIVQRWIRGFLVRKNLSPVFFHKKK. Residues 553 to 614 are a coiled coil; that stretch reads KQKLKAEKYR…TKVAIVKTNL (62 aa).

The protein is Leucine-rich repeat and IQ domain-containing protein 3 (LRRIQ3) of Homo sapiens (Human).